Here is a 158-residue protein sequence, read N- to C-terminus: uncharacterized protein (158 aa).

Residues 1–16 form the signal peptide; that stretch reads MFRPILILTILSCVLA. Asn-122 carries an N-linked (GlcNAc...) asparagine glycan.

This is an uncharacterized protein from Caenorhabditis elegans.